A 395-amino-acid chain; its full sequence is Acetate kinase 2 (395 aa).

Asn-8 serves as a coordination point for Mg(2+). Lys-15 is an ATP binding site. Arg-89 lines the substrate pocket. The active-site Proton donor/acceptor is Asp-146. Residues 206-210, 283-285, and 331-335 contribute to the ATP site; these read HIGNG, DMR, and GVGEN. Glu-383 serves as a coordination point for Mg(2+).

It belongs to the acetokinase family. As to quaternary structure, homodimer. The cofactor is Mg(2+). It depends on Mn(2+) as a cofactor.

The protein resides in the cytoplasm. It catalyses the reaction acetate + ATP = acetyl phosphate + ADP. The protein operates within metabolic intermediate biosynthesis; acetyl-CoA biosynthesis; acetyl-CoA from acetate: step 1/2. Its function is as follows. Catalyzes the formation of acetyl phosphate from acetate and ATP. Can also catalyze the reverse reaction. This chain is Acetate kinase 2, found in Lactococcus lactis subsp. lactis (strain IL1403) (Streptococcus lactis).